The primary structure comprises 949 residues: Copper-transporting ATPase PAA1, chloroplastic (949 aa).

The transit peptide at 1–103 (MESTLSAFST…SSSPSFRSIS (103 aa)) directs the protein to the chloroplast. The segment covering 113-126 (YNGGSGGGGGGGSE) has biased composition (gly residues). The disordered stretch occupies residues 113–142 (YNGGSGGGGGGGSESGDSKSKLGANASDGV). Positions 148 to 222 (DIIILDVGGM…HLTNCGFQST (75 aa)) constitute an HMA domain. Positions 159 and 162 each coordinate Cu(+). Helical transmembrane passes span 253-274 (LAVS…FLGV), 287-306 (FHVS…LVLD), 314-334 (GSPN…SVSS), 349-369 (EEPV…QRAK), 502-524 (VAGR…WNLF), and 543-560 (LQLS…ALGL). Asp-598 serves as the catalytic 4-aspartylphosphate intermediate. 807-814 (GDGINDAA) contributes to the ATP binding site. Mg(2+) is bound by residues Asp-808 and Asp-812. Helical transmembrane passes span 863 to 882 (KQNL…IAAG) and 895 to 913 (SMAG…TNSL). Positions 925–949 (DKNVKPEPKEGTKQPHENTRWKQSS) are disordered.

Belongs to the cation transport ATPase (P-type) (TC 3.A.3) family. Type IB subfamily. As to expression, expressed in the shoots and roots.

The protein localises to the plastid. It localises to the chloroplast membrane. The enzyme catalyses Cu(+)(in) + ATP + H2O = Cu(+)(out) + ADP + phosphate + H(+). Its function is as follows. Mediates copper transfer across the plastid envelope. Required for the delivery of copper into the plastid stroma, which is essential for the function of copper proteins. Seems to be selective for monovalent copper Cu(+) transport. Also plays a role in glucose signaling-mediated cell proliferation of root meristem in non-green tissues. The polypeptide is Copper-transporting ATPase PAA1, chloroplastic (PAA1) (Arabidopsis thaliana (Mouse-ear cress)).